Consider the following 264-residue polypeptide: Flagellar brake protein YcgR 1 (264 aa).

The PilZ domain occupies 132–249 (QRREFFRLES…RLAMIERYIA (118 aa)).

The protein belongs to the YcgR family. Monomer. Interacts with the flagellar basal bodies.

The protein resides in the bacterial flagellum basal body. Acts as a flagellar brake, regulating swimming and swarming in a bis-(3'-5') cyclic diguanylic acid (c-di-GMP)-dependent manner. Binds 1 c-di-GMP dimer per subunit. Increasing levels of c-di-GMP lead to decreased motility. The polypeptide is Flagellar brake protein YcgR 1 (Dechloromonas aromatica (strain RCB)).